Consider the following 81-residue polypeptide: Photosystem I iron-sulfur center (81 aa).

4Fe-4S ferredoxin-type domains are found at residues 2-31 and 39-68; these read AHSVKIYDTCIGCTQCVRACPTDVLEMIPW and IASAPRTEDCVGCKRCESACPTDFLSVRVY. C11, C14, C17, C21, C48, C51, C54, and C58 together coordinate [4Fe-4S] cluster.

As to quaternary structure, the eukaryotic PSI reaction center is composed of at least 11 subunits. [4Fe-4S] cluster is required as a cofactor.

The protein localises to the plastid. It localises to the chloroplast thylakoid membrane. It carries out the reaction reduced [plastocyanin] + hnu + oxidized [2Fe-2S]-[ferredoxin] = oxidized [plastocyanin] + reduced [2Fe-2S]-[ferredoxin]. Functionally, apoprotein for the two 4Fe-4S centers FA and FB of photosystem I (PSI); essential for photochemical activity. FB is the terminal electron acceptor of PSI, donating electrons to ferredoxin. The C-terminus interacts with PsaA/B/D and helps assemble the protein into the PSI complex. Required for binding of PsaD and PsaE to PSI. PSI is a plastocyanin-ferredoxin oxidoreductase, converting photonic excitation into a charge separation, which transfers an electron from the donor P700 chlorophyll pair to the spectroscopically characterized acceptors A0, A1, FX, FA and FB in turn. The chain is Photosystem I iron-sulfur center from Adiantum capillus-veneris (Maidenhair fern).